A 111-amino-acid chain; its full sequence is Parvalbumin alpha (111 aa).

The residue at position 1 (Thr1) is an N-acetylthreonine; in form C2. 2 consecutive EF-hand domains span residues 40-75 (KPDD…FAAG) and 79-111 (LTAN…VKAA). Ca(2+) contacts are provided by Asp53, Asp55, Ser57, Tyr59, Glu61, Glu64, Asp92, Asp94, Asp96, Lys98, and Glu103.

This sequence belongs to the parvalbumin family. Post-translationally, acetylation of Thr-1 converts C1 to C2.

Its function is as follows. In muscle, parvalbumin is thought to be involved in relaxation after contraction. It binds two calcium ions. The polypeptide is Parvalbumin alpha (Latimeria chalumnae (Coelacanth)).